Here is a 376-residue protein sequence, read N- to C-terminus: Glucose-1-phosphate adenylyltransferase (376 aa).

Residues Tyr-101, Gly-166, 181–182, and Ser-192 each bind alpha-D-glucose 1-phosphate; that span reads EK.

The protein belongs to the bacterial/plant glucose-1-phosphate adenylyltransferase family. In terms of assembly, homotetramer.

The enzyme catalyses alpha-D-glucose 1-phosphate + ATP + H(+) = ADP-alpha-D-glucose + diphosphate. The protein operates within glycan biosynthesis; glycogen biosynthesis. Involved in the biosynthesis of ADP-glucose, a building block required for the elongation reactions to produce glycogen. Catalyzes the reaction between ATP and alpha-D-glucose 1-phosphate (G1P) to produce pyrophosphate and ADP-Glc. This chain is Glucose-1-phosphate adenylyltransferase, found in Bacillus thuringiensis (strain Al Hakam).